The sequence spans 286 residues: Pantothenate synthetase (286 aa).

ATP is bound at residue 30–37 (MGALHEGH). H37 serves as the catalytic Proton donor. Q61 provides a ligand contact to (R)-pantoate. Q61 contributes to the beta-alanine binding site. ATP is bound at residue 147–150 (GEKD). Q153 is a binding site for (R)-pantoate. Residues V180 and 188-191 (LSSR) contribute to the ATP site.

It belongs to the pantothenate synthetase family. As to quaternary structure, homodimer.

It is found in the cytoplasm. It catalyses the reaction (R)-pantoate + beta-alanine + ATP = (R)-pantothenate + AMP + diphosphate + H(+). It participates in cofactor biosynthesis; (R)-pantothenate biosynthesis; (R)-pantothenate from (R)-pantoate and beta-alanine: step 1/1. Its function is as follows. Catalyzes the condensation of pantoate with beta-alanine in an ATP-dependent reaction via a pantoyl-adenylate intermediate. The chain is Pantothenate synthetase from Novosphingobium aromaticivorans (strain ATCC 700278 / DSM 12444 / CCUG 56034 / CIP 105152 / NBRC 16084 / F199).